The primary structure comprises 391 residues: Acridone synthase 2 (391 aa).

Residue Cys-164 is part of the active site.

This sequence belongs to the thiolase-like superfamily. Chalcone/stilbene synthases family. As to quaternary structure, homodimer.

The enzyme catalyses N-methylanthraniloyl-CoA + 3 malonyl-CoA + 3 H(+) = 1,3-dihydroxy-N-methylacridone + 3 CO2 + 4 CoA + H2O. The chain is Acridone synthase 2 (ACS2) from Ruta graveolens (Common rue).